The following is a 1572-amino-acid chain: Helicase SWR1 (1572 aa).

Disordered regions lie at residues S61–N94, C119–T291, and T304–S323. Composition is skewed to polar residues over residues I82–N94 and T152–K173. Residues T179 to S192 are compositionally biased toward basic and acidic residues. The segment covering S216–V232 has biased composition (basic residues). Residues L238 to K269 are compositionally biased toward basic and acidic residues. Residues E282–T291 show a composition bias toward polar residues. The region spanning I424 to R496 is the HSA domain. Disordered regions lie at residues T555 to M604, F624 to S675, and F694 to P749. Low complexity predominate over residues S558–S568. Over residues A569–M583 the composition is skewed to acidic residues. The segment covering D590 to N602 has biased composition (basic and acidic residues). Low complexity predominate over residues D643–E657. The segment covering F694–D705 has biased composition (acidic residues). The span at S726–T737 shows a compositional bias: basic and acidic residues. One can recognise a Helicase ATP-binding domain in the interval A777–Q942. D790–T797 contributes to the ATP binding site. The DEAH box signature appears at D893–H896. The Helicase C-terminal domain maps to K1314–T1464. The interval A1505–S1556 is disordered. Positions A1511–N1522 are enriched in basic and acidic residues. Residues E1543–Y1552 show a composition bias toward acidic residues.

The protein belongs to the SNF2/RAD54 helicase family. SWR1 subfamily. In terms of assembly, component of the SWR1 chromatin-remodeling complex.

It localises to the nucleus. The enzyme catalyses ATP + H2O = ADP + phosphate + H(+). Catalytic component of the SWR1 complex which mediates the ATP-dependent exchange of histone H2A for the H2A variant HZT1 leading to transcriptional regulation of selected genes by chromatin remodeling. The protein is Helicase SWR1 (SWR1) of Kluyveromyces lactis (strain ATCC 8585 / CBS 2359 / DSM 70799 / NBRC 1267 / NRRL Y-1140 / WM37) (Yeast).